Reading from the N-terminus, the 179-residue chain is Large ribosomal subunit protein eL18 (179 aa).

This sequence belongs to the eukaryotic ribosomal protein eL18 family. In terms of assembly, component of the large ribosomal subunit.

Its subcellular location is the cytoplasm. It localises to the cytosol. The protein resides in the rough endoplasmic reticulum. Component of the large ribosomal subunit. The ribosome is a large ribonucleoprotein complex responsible for the synthesis of proteins in the cell. This Salmo salar (Atlantic salmon) protein is Large ribosomal subunit protein eL18 (rpl18).